The following is a 199-amino-acid chain: LexA repressor (199 aa).

Residues 28-47 constitute a DNA-binding region (H-T-H motif); sequence IRDIAKHFKLTPRGAHIHVI. Catalysis depends on for autocatalytic cleavage activity residues serine 120 and lysine 157.

This sequence belongs to the peptidase S24 family. As to quaternary structure, homodimer.

It carries out the reaction Hydrolysis of Ala-|-Gly bond in repressor LexA.. Functionally, represses a number of genes involved in the response to DNA damage (SOS response), including recA and lexA. In the presence of single-stranded DNA, RecA interacts with LexA causing an autocatalytic cleavage which disrupts the DNA-binding part of LexA, leading to derepression of the SOS regulon and eventually DNA repair. This Thermosipho melanesiensis (strain DSM 12029 / CIP 104789 / BI429) protein is LexA repressor.